We begin with the raw amino-acid sequence, 383 residues long: UDP-N-acetylglucosamine 2-epimerase (383 aa).

This sequence belongs to the UDP-N-acetylglucosamine 2-epimerase family.

The enzyme catalyses UDP-N-acetyl-alpha-D-glucosamine = UDP-N-acetyl-alpha-D-mannosamine. It functions in the pathway capsule biogenesis; capsule polysaccharide biosynthesis. Functionally, non-hydrolyzing C2-epimerase involved in the biosynthesis of capsular polysaccharides. Catalyzes the C2 epimerization of UDP-N-acetylglucosamine (UDP-GlcNAc) to form UDP-N-acetylmannosamine (UDP-ManNAc). The chain is UDP-N-acetylglucosamine 2-epimerase from Campylobacter jejuni.